The chain runs to 500 residues: GTPase Der (500 aa).

EngA-type G domains follow at residues 3 to 166 (PVVA…MEEL) and 211 to 384 (IKLA…VSAT). GTP-binding positions include 9–16 (GRPNVGKS), 56–60 (DTGGI), 118–121 (NKID), 217–224 (GRPNVGKS), 264–268 (DTAGV), and 329–332 (NKWD). One can recognise a KH-like domain in the interval 385 to 469 (KRVGTSVLTR…PIRIQFQNSE (85 aa)). A disordered region spans residues 481–500 (LSQERQRKRLVGAVKNRNKK). A compositionally biased stretch (basic residues) spans 486–500 (QRKRLVGAVKNRNKK).

The protein belongs to the TRAFAC class TrmE-Era-EngA-EngB-Septin-like GTPase superfamily. EngA (Der) GTPase family. Associates with the 50S ribosomal subunit.

In terms of biological role, GTPase that plays an essential role in the late steps of ribosome biogenesis. The protein is GTPase Der of Aliivibrio salmonicida (strain LFI1238) (Vibrio salmonicida (strain LFI1238)).